A 467-amino-acid chain; its full sequence is Putative vacuolar protein sorting-associated protein TDA6 (467 aa).

Residues I8–L28 form a helical membrane-spanning segment. 3 N-linked (GlcNAc...) asparagine glycosylation sites follow: N61, N124, and N141.

Belongs to the VPS62 family.

It localises to the membrane. Its function is as follows. Involved in vacuolar protein sorting. This Saccharomyces cerevisiae (strain ATCC 204508 / S288c) (Baker's yeast) protein is Putative vacuolar protein sorting-associated protein TDA6 (TDA6).